The primary structure comprises 285 residues: UDP-3-O-acyl-N-acetylglucosamine deacetylase (285 aa).

Residues H89, H243, and D247 each contribute to the Zn(2+) site. Catalysis depends on H270, which acts as the Proton donor.

This sequence belongs to the LpxC family. Zn(2+) serves as cofactor.

It carries out the reaction a UDP-3-O-[(3R)-3-hydroxyacyl]-N-acetyl-alpha-D-glucosamine + H2O = a UDP-3-O-[(3R)-3-hydroxyacyl]-alpha-D-glucosamine + acetate. The protein operates within glycolipid biosynthesis; lipid IV(A) biosynthesis; lipid IV(A) from (3R)-3-hydroxytetradecanoyl-[acyl-carrier-protein] and UDP-N-acetyl-alpha-D-glucosamine: step 2/6. Catalyzes the hydrolysis of UDP-3-O-myristoyl-N-acetylglucosamine to form UDP-3-O-myristoylglucosamine and acetate, the committed step in lipid A biosynthesis. The sequence is that of UDP-3-O-acyl-N-acetylglucosamine deacetylase from Thermosynechococcus vestitus (strain NIES-2133 / IAM M-273 / BP-1).